Consider the following 134-residue polypeptide: Profilin-2 (134 aa).

A disulfide bond links Cys13 and Cys118. The Involved in PIP2 interaction motif lies at 84–100; that stretch reads AVIRGKKGSGGITIKKT. Thr114 is modified (phosphothreonine).

This sequence belongs to the profilin family. Occurs in many kinds of cells as a complex with monomeric actin in a 1:1 ratio. In terms of processing, phosphorylated by MAP kinases.

The protein localises to the cytoplasm. It localises to the cytoskeleton. Binds to actin and affects the structure of the cytoskeleton. At high concentrations, profilin prevents the polymerization of actin, whereas it enhances it at low concentrations. The chain is Profilin-2 from Olea europaea (Common olive).